The chain runs to 80 residues: Serine palmitoyltransferase small subunit B (80 aa).

Over 1 to 11 (MDMKNMREYMS) the chain is Cytoplasmic. The chain crosses the membrane as a helical span at residues 12–29 (WLYYQYLLITGIYVLEPW). At 30 to 36 (EQSIFNT) the chain is on the lumenal side. Residues 37 to 57 (VLFTMVAMVIYTSYVFVPIHV) traverse the membrane as a helical segment. The Cytoplasmic segment spans residues 58–80 (RLALEFFCELVGGQPESTVALMT).

This sequence belongs to the SPTSS family. SPTSSB subfamily. Component of the serine palmitoyltransferase (SPT) complex, which is composed of SPTLC1, SPTLC2 or SPTLC3 and SPTSSA or SPTSSB. The heterodimer consisting of SPTLC1 and SPTLC2/SPTLC3 forms the catalytic core of the enzyme, while SPTSSA or SPTSSB subunits determine substrate specificity. SPT also interacts with ORMDL proteins, especially ORMDL3, which negatively regulate SPT activity in the presence of ceramides.

The protein resides in the endoplasmic reticulum membrane. Its pathway is lipid metabolism; sphingolipid metabolism. Its function is as follows. Component of the serine palmitoyltransferase multisubunit enzyme (SPT) that catalyzes the initial and rate-limiting step in sphingolipid biosynthesis by condensing L-serine and activated acyl-CoA (most commonly palmitoyl-CoA) to form long-chain bases. The SPT complex is composed of SPTLC1, SPTLC2 or SPTLC3 and SPTSSA or SPTSSB. Within this complex, the heterodimer consisting of SPTLC1 and SPTLC2/SPTLC3 forms the catalytic core. Within the SPT complex, SPTSSB stimulates the catalytic activity and plays a role in substrate specificity. SPT complexes with this subunit showing a preference for longer acyl-CoAs. The SPTLC1-SPTLC2-SPTSSB complex shows a strong preference for C18-CoA substrate, while the SPTLC1-SPTLC3-SPTSSB isozyme displays an ability to use a broader range of acyl-CoAs, without apparent preference. This is Serine palmitoyltransferase small subunit B (sptssb) from Danio rerio (Zebrafish).